The chain runs to 770 residues: Low-density lipoprotein receptor-related protein 3 (770 aa).

The N-terminal stretch at 1 to 36 (MEKRAAAGPEGAPGARAPLAVVCLVNLFLTGRLSSA) is a signal peptide. Topologically, residues 37–496 (VPALAACSGK…HGCLAAVPRK (460 aa)) are extracellular. Cystine bridges form between Cys43–Cys72, Cys99–Cys120, Cys166–Cys178, Cys173–Cys191, Cys185–Cys200, Cys212–Cys227, Cys219–Cys240, Cys234–Cys249, and Cys254–Cys282. The CUB 1 domain occupies 43-159 (CSGKLEQHTE…QGFRLSYIRG (117 aa)). The N-linked (GlcNAc...) asparagine glycan is linked to Asn71. LDL-receptor class A domains are found at residues 165 to 201 (SCQT…GNCS) and 211 to 250 (LCPG…AGCP). Residue Asn199 is glycosylated (N-linked (GlcNAc...) asparagine). A CUB 2 domain is found at 254-365 (CGRRLGSFYG…HGFNATYQVK (112 aa)). Residue Asn359 is glycosylated (N-linked (GlcNAc...) asparagine). 2 consecutive LDL-receptor class A domains span residues 415–453 (ACPP…KNCF) and 454–490 (SCQP…HGCL). Intrachain disulfides connect Cys416–Cys430, Cys423–Cys443, Cys437–Cys452, Cys455–Cys467, Cys462–Cys480, and Cys474–Cys489. Residues 497–517 (VITAALIGSLVCGLLLVIALG) form a helical membrane-spanning segment. The Cytoplasmic portion of the chain corresponds to 518–770 (CAFKLYSLRT…ASDDEALLVC (253 aa)). The disordered stretch occupies residues 639-753 (LLQAAPGPVP…PLGVCRSPPP (115 aa)). The span at 689-703 (RDPEYRPEDKERKAC) shows a compositional bias: basic and acidic residues.

Belongs to the LDLR family. In terms of assembly, binds GGA1 and GGA2.

It is found in the membrane. The protein resides in the coated pit. Its function is as follows. Probable receptor, which may be involved in the internalization of lipophilic molecules and/or signal transduction. Its precise role is however unclear, since it does not bind to very low density lipoprotein (VLDL) or to LRPAP1 in vitro. The sequence is that of Low-density lipoprotein receptor-related protein 3 (Lrp3) from Rattus norvegicus (Rat).